We begin with the raw amino-acid sequence, 1063 residues long: Cation efflux system protein CzcA (1063 aa).

10 helical membrane passes run 14 to 29 (WLVL…LGIF), 350 to 370 (GAVL…AALI), 452 to 472 (LIFG…LTGV), 487 to 507 (ALLG…ALFI), 534 to 554 (LANT…CVAI), 883 to 903 (VVVP…FNNI), 906 to 926 (GLLV…ALWI), 937 to 957 (VGFI…LSFI), 982 to 1004 (VLMT…GTGA), and 1013 to 1033 (VVIG…PVLY). The tract at residues 1040–1063 (DEDAEDTREPVTQTHQPDQGRQPA) is disordered. Polar residues predominate over residues 1049–1063 (PVTQTHQPDQGRQPA).

Belongs to the resistance-nodulation-cell division (RND) (TC 2.A.6) family.

It localises to the cell membrane. In terms of biological role, has a low cation transport activity for cobalt, it is essential for the expression of cobalt, zinc, and cadmium resistance. CzcA and CzcB together would act in zinc efflux nearly as effectively as the complete CZC efflux system (CzcABC). This Alcaligenes sp. (strain CT14) protein is Cation efflux system protein CzcA (czcA).